The following is a 327-amino-acid chain: Aspartate carbamoyltransferase catalytic subunit (327 aa).

Carbamoyl phosphate contacts are provided by R67 and T68. K95 is a binding site for L-aspartate. Positions 117, 145, and 148 each coordinate carbamoyl phosphate. L-aspartate contacts are provided by R178 and R232. Positions 273 and 274 each coordinate carbamoyl phosphate.

This sequence belongs to the aspartate/ornithine carbamoyltransferase superfamily. ATCase family. In terms of assembly, heterododecamer (2C3:3R2) of six catalytic PyrB chains organized as two trimers (C3), and six regulatory PyrI chains organized as three dimers (R2).

It carries out the reaction carbamoyl phosphate + L-aspartate = N-carbamoyl-L-aspartate + phosphate + H(+). It functions in the pathway pyrimidine metabolism; UMP biosynthesis via de novo pathway; (S)-dihydroorotate from bicarbonate: step 2/3. Its function is as follows. Catalyzes the condensation of carbamoyl phosphate and aspartate to form carbamoyl aspartate and inorganic phosphate, the committed step in the de novo pyrimidine nucleotide biosynthesis pathway. The polypeptide is Aspartate carbamoyltransferase catalytic subunit (Parvibaculum lavamentivorans (strain DS-1 / DSM 13023 / NCIMB 13966)).